The sequence spans 195 residues: Glucagon family neuropeptides (195 aa).

The first 20 residues, 1–20 (MAKSSRATLALLIYGILMRY), serve as a signal peptide directing secretion. Positions 21–82 (SQCTPIGMGF…YYPPERRAET (62 aa)) are excised as a propeptide. Residues 113 to 132 (VGEEEEDEEDSEPLSKRHSD) form a disordered region. The segment covering 115 to 124 (EEEEDEEDSE) has biased composition (acidic residues). Lys-167 carries the post-translational modification Lysine amide. A propeptide spanning residues 171-195 (LVVPSVWTGIRDTVIITPEKRGKRY) is cleaved from the precursor.

It belongs to the glucagon family. In terms of tissue distribution, brain, testis, ovary and stomach. Not pancreas, pituitary, muscle and liver.

Its subcellular location is the secreted. Its function is as follows. Primary role of GHRH is to release GH from the pituitary. In terms of biological role, PACAP plays pivotal roles as a neurotransmitter and/or a neuromodulator. In Clarias macrocephalus (Bighead catfish), this protein is Glucagon family neuropeptides.